Consider the following 663-residue polypeptide: ATP-dependent zinc metalloprotease FtsH (663 aa).

Residues 1-12 (MNKKETNTSWWR) are Stromal-facing. Residues 13–33 (IILISLGISIICILAAFLAMK) traverse the membrane as a helical segment. At 34 to 135 (DGFFVLENNT…HPPKLDIFKT (102 aa)) the chain is on the lumenal side. Residues 136–156 (ISDTLGSLIVPGLVVAVFYLF) traverse the membrane as a helical segment. Over 157–663 (LERANNNNNN…KIYESKFPKK (507 aa)) the chain is Stromal. Residues 165-184 (NNNSNGSPFGPGGGPNQNMR) form a disordered region. 244–251 (GPPGTGKT) is an ATP binding site. Residue histidine 465 participates in Zn(2+) binding. The active site involves glutamate 466. Residues histidine 469 and aspartate 543 each contribute to the Zn(2+) site.

It in the central section; belongs to the AAA ATPase family. In the C-terminal section; belongs to the peptidase M41 family. In terms of assembly, homohexamer. Zn(2+) serves as cofactor.

It localises to the plastid. The protein resides in the chloroplast thylakoid membrane. Functionally, acts as a processive, ATP-dependent zinc metallopeptidase. The chain is ATP-dependent zinc metalloprotease FtsH from Heterosigma akashiwo (strain NIES-293 / 8280G21-1).